The sequence spans 445 residues: POU domain, class 5, transcription factor 1.2 (445 aa).

Composition is skewed to polar residues over residues 76–88 and 164–182; these read SANQ…QGNP and IFTS…SLDN. 2 disordered regions span residues 76–116 and 139–227; these read SANQ…PSLP and TTVV…GEME. Over residues 183 to 200 the composition is skewed to low complexity; that stretch reads SRCSSATSSSSGGTNVGT. Residues 218 to 292 form the POU-specific domain; that stretch reads EEAPNSGEME…LLRSWLHEVE (75 aa). The segment at residues 312–371 is a DNA-binding region (homeobox); the sequence is KRKHRTSIENNVKCTLENYFMQCSKPSAQEIAQIARELNMEKDVVRVWFCNRRQKGKRQV.

It belongs to the POU transcription factor family. Class-5 subfamily. In terms of assembly, interacts with the transcription factors tcf7l1/tcf3 and vegt. Initially (stage 9) expressed in all regions of the embryo, becoming localized to the ventroposterior regions by early neurula stages. In adults, expressed at a low level in the brain.

It is found in the nucleus. Functionally, transcription factor that binds to the octamer motif (5'-ATTTGCAT-3'). Antagonizes the activity of nodal/activin signaling during gastrulation to suppress mesendoderm formation. This is POU domain, class 5, transcription factor 1.2 (pou5f1.2) from Xenopus laevis (African clawed frog).